A 1111-amino-acid polypeptide reads, in one-letter code: Protein NETWORKED 1C (1111 aa).

An NAB domain is found at 13 to 93 (YSWWWDSHNT…ERYNHATGVI (81 aa)). Coiled-coil stretches lie at residues 202 to 287 (SESE…KESS), 314 to 605 (ERAS…LISE), and 642 to 752 (KTIG…LESK). A disordered region spans residues 850 to 870 (TGGGRSMRKQDGGSGRMRKQS). Residues 943–1009 (NREVNKRRVL…EGEEAIEKLF (67 aa)) are a coiled coil.

The protein belongs to the NET family.

In terms of biological role, plant-specific actin binding protein. May be part of a membrane-cytoskeletal adapter complex. This Arabidopsis thaliana (Mouse-ear cress) protein is Protein NETWORKED 1C.